Here is a 354-residue protein sequence, read N- to C-terminus: uncharacterized protein (354 aa).

A helical membrane pass occupies residues 43-63; that stretch reads LIAVTLWSCVGSLLFICLLAV.

It is found in the cell membrane. This is an uncharacterized protein from Bacillus subtilis (strain 168).